The primary structure comprises 118 residues: Large ribosomal subunit protein bL20 (118 aa).

The protein belongs to the bacterial ribosomal protein bL20 family.

In terms of biological role, binds directly to 23S ribosomal RNA and is necessary for the in vitro assembly process of the 50S ribosomal subunit. It is not involved in the protein synthesizing functions of that subunit. This Clostridioides difficile (strain 630) (Peptoclostridium difficile) protein is Large ribosomal subunit protein bL20.